The following is a 59-amino-acid chain: UPF0434 protein VIBHAR_01537 (59 aa).

The protein belongs to the UPF0434 family.

The sequence is that of UPF0434 protein VIBHAR_01537 from Vibrio campbellii (strain ATCC BAA-1116).